The primary structure comprises 205 residues: Small ribosomal subunit protein uS4 (205 aa).

The S4 RNA-binding domain maps to 94-157 (SRLDTVVYRM…KQIALIQESI (64 aa)).

Belongs to the universal ribosomal protein uS4 family. Part of the 30S ribosomal subunit. Contacts protein S5. The interaction surface between S4 and S5 is involved in control of translational fidelity.

In terms of biological role, one of the primary rRNA binding proteins, it binds directly to 16S rRNA where it nucleates assembly of the body of the 30S subunit. Functionally, with S5 and S12 plays an important role in translational accuracy. The protein is Small ribosomal subunit protein uS4 of Rickettsia canadensis (strain McKiel).